Consider the following 396-residue polypeptide: Elongation factor Tu (396 aa).

A tr-type G domain is found at 10–206 (KPHVNVGTIG…ALDTFIPEPT (197 aa)). Residues 19–26 (GHVDHGKT) form a G1 region. 19–26 (GHVDHGKT) is a binding site for GTP. A Mg(2+)-binding site is contributed by Thr-26. Residues 60–64 (GITIS) form a G2 region. Positions 81–84 (DCPG) are G3. Residues 81-85 (DCPGH) and 136-139 (NKAD) contribute to the GTP site. Residues 136 to 139 (NKAD) are G4. The G5 stretch occupies residues 174-176 (SAR).

The protein belongs to the TRAFAC class translation factor GTPase superfamily. Classic translation factor GTPase family. EF-Tu/EF-1A subfamily. Monomer.

It localises to the cytoplasm. It carries out the reaction GTP + H2O = GDP + phosphate + H(+). Its function is as follows. GTP hydrolase that promotes the GTP-dependent binding of aminoacyl-tRNA to the A-site of ribosomes during protein biosynthesis. The polypeptide is Elongation factor Tu (Xanthomonas oryzae pv. oryzae (strain MAFF 311018)).